The primary structure comprises 274 residues: Type II restriction enzyme XamI (274 aa).

The catalysed reaction is Endonucleolytic cleavage of DNA to give specific double-stranded fragments with terminal 5'-phosphates.. In terms of biological role, a P subtype restriction enzyme that recognizes the double-stranded sequence 5'-GTCGAC-3' and cleaves after G-1. The protein is Type II restriction enzyme XamI (xamIR) of Xanthomonas campestris pv. amaranthicola.